A 1176-amino-acid chain; its full sequence is DNA-directed RNA polymerase subunit beta (1176 aa).

Polar residues predominate over residues 13 to 30; it reads TDASLHQGRPQSSSNSSV. Positions 13 to 35 are disordered; the sequence is TDASLHQGRPQSSSNSSVPGAPN.

It belongs to the RNA polymerase beta chain family. As to quaternary structure, the RNAP catalytic core consists of 2 alpha, 1 beta, 1 beta' and 1 omega subunit. When a sigma factor is associated with the core the holoenzyme is formed, which can initiate transcription.

The enzyme catalyses RNA(n) + a ribonucleoside 5'-triphosphate = RNA(n+1) + diphosphate. In terms of biological role, DNA-dependent RNA polymerase catalyzes the transcription of DNA into RNA using the four ribonucleoside triphosphates as substrates. In Mycobacterium ulcerans (strain Agy99), this protein is DNA-directed RNA polymerase subunit beta.